Here is a 599-residue protein sequence, read N- to C-terminus: Elongation factor 4 (599 aa).

Positions 4 to 186 (KFIRNFSIIA…AIIKHVPPPL (183 aa)) constitute a tr-type G domain. GTP is bound by residues 16–21 (DHGKST) and 133–136 (NKID).

This sequence belongs to the TRAFAC class translation factor GTPase superfamily. Classic translation factor GTPase family. LepA subfamily.

It is found in the cell membrane. The enzyme catalyses GTP + H2O = GDP + phosphate + H(+). Functionally, required for accurate and efficient protein synthesis under certain stress conditions. May act as a fidelity factor of the translation reaction, by catalyzing a one-codon backward translocation of tRNAs on improperly translocated ribosomes. Back-translocation proceeds from a post-translocation (POST) complex to a pre-translocation (PRE) complex, thus giving elongation factor G a second chance to translocate the tRNAs correctly. Binds to ribosomes in a GTP-dependent manner. The protein is Elongation factor 4 of Ureaplasma urealyticum serovar 10 (strain ATCC 33699 / Western).